Here is a 323-residue protein sequence, read N- to C-terminus: Ubiquinone biosynthesis protein COQ4, mitochondrial (323 aa).

Residues histidine 203, aspartate 204, histidine 207, and glutamate 219 each coordinate Zn(2+).

It belongs to the COQ4 family. As to quaternary structure, component of a multi-subunit COQ enzyme complex, composed of at least COQ3, COQ4, COQ5, COQ6, COQ7 and COQ9. It depends on Zn(2+) as a cofactor.

Its subcellular location is the mitochondrion inner membrane. The enzyme catalyses a 4-hydroxy-3-methoxy-5-(all-trans-polyprenyl)benzoate + H(+) = a 2-methoxy-6-(all-trans-polyprenyl)phenol + CO2. Its pathway is cofactor biosynthesis; ubiquinone biosynthesis. Its function is as follows. Lyase that catalyzes the C1-decarboxylation of 4-hydroxy-3-methoxy-5-(all-trans-polyprenyl)benzoic acid into 2-methoxy-6-(all-trans-polyprenyl)phenol during ubiquinone biosynthesis. This Eremothecium gossypii (strain ATCC 10895 / CBS 109.51 / FGSC 9923 / NRRL Y-1056) (Yeast) protein is Ubiquinone biosynthesis protein COQ4, mitochondrial.